Reading from the N-terminus, the 201-residue chain is Glycerol-3-phosphate acyltransferase (201 aa).

The next 6 membrane-spanning stretches (helical) occupy residues 10-30 (MLIG…GLIL), 60-80 (LAAA…LIAA), 86-106 (AAIA…WIGF), 116-136 (LGVL…AWIV), 139-159 (LLTR…PIAL), and 166-186 (ALAA…RANI).

The protein belongs to the PlsY family. Probably interacts with PlsX.

The protein localises to the cell inner membrane. The catalysed reaction is an acyl phosphate + sn-glycerol 3-phosphate = a 1-acyl-sn-glycero-3-phosphate + phosphate. Its pathway is lipid metabolism; phospholipid metabolism. Catalyzes the transfer of an acyl group from acyl-phosphate (acyl-PO(4)) to glycerol-3-phosphate (G3P) to form lysophosphatidic acid (LPA). This enzyme utilizes acyl-phosphate as fatty acyl donor, but not acyl-CoA or acyl-ACP. The chain is Glycerol-3-phosphate acyltransferase from Brucella suis (strain ATCC 23445 / NCTC 10510).